Consider the following 549-residue polypeptide: Probable amidase (549 aa).

Active-site charge relay system residues include Lys-132 and Ser-209. Catalysis depends on Ser-233, which acts as the Acyl-ester intermediate.

It belongs to the amidase family.

The catalysed reaction is a monocarboxylic acid amide + H2O = a monocarboxylate + NH4(+). In Saccharomyces cerevisiae (strain ATCC 204508 / S288c) (Baker's yeast), this protein is Probable amidase (AMD2).